The primary structure comprises 196 residues: Ribosome maturation factor RimP (196 aa).

Residues 163–196 (GLAPSKPTGPAPKRPKPNTNSSSNEPAAKKPRAE) are disordered.

The protein belongs to the RimP family.

The protein resides in the cytoplasm. Its function is as follows. Required for maturation of 30S ribosomal subunits. In Stenotrophomonas maltophilia (strain K279a), this protein is Ribosome maturation factor RimP.